Consider the following 313-residue polypeptide: Putative zinc finger protein 077L (313 aa).

The C3H1-type zinc-finger motif lies at Cys174–His199. Residues Ser294–Phe313 form a disordered region. A compositionally biased stretch (acidic residues) spans Asp296–Phe313.

The protein belongs to the IIV-6 077L family.

This is Putative zinc finger protein 077L from Invertebrate iridescent virus 6 (IIV-6).